Here is a 240-residue protein sequence, read N- to C-terminus: Arginine transport ATP-binding protein ArtM (240 aa).

In terms of domain architecture, ABC transporter spans 2–236 (IKVEKLSKSF…PKSKRAQDFL (235 aa)). 34-41 (GPSGSGKS) serves as a coordination point for ATP.

The protein belongs to the ABC transporter superfamily.

It is found in the cell membrane. Part of a binding-protein-dependent transport system for arginine. Probably responsible for energy coupling to the transport system. This is Arginine transport ATP-binding protein ArtM (artM) from Bacillus subtilis (strain 168).